An 876-amino-acid polypeptide reads, in one-letter code: Phosphoenolpyruvate carboxylase (876 aa).

Residues H138 and K543 contribute to the active site.

Belongs to the PEPCase type 1 family. Mg(2+) serves as cofactor.

It carries out the reaction oxaloacetate + phosphate = phosphoenolpyruvate + hydrogencarbonate. Its function is as follows. Forms oxaloacetate, a four-carbon dicarboxylic acid source for the tricarboxylic acid cycle. This chain is Phosphoenolpyruvate carboxylase, found in Pseudomonas fluorescens (strain ATCC BAA-477 / NRRL B-23932 / Pf-5).